The sequence spans 632 residues: tRNA uridine 5-carboxymethylaminomethyl modification enzyme MnmG (632 aa).

14-19 is a binding site for FAD; that stretch reads GAGHAG. Residue 273–287 coordinates NAD(+); that stretch reads GPRYCPSFEDKIMRF.

It belongs to the MnmG family. In terms of assembly, homodimer. Heterotetramer of two MnmE and two MnmG subunits. FAD is required as a cofactor.

It localises to the cytoplasm. NAD-binding protein involved in the addition of a carboxymethylaminomethyl (cmnm) group at the wobble position (U34) of certain tRNAs, forming tRNA-cmnm(5)s(2)U34. This is tRNA uridine 5-carboxymethylaminomethyl modification enzyme MnmG from Clostridium novyi (strain NT).